A 166-amino-acid chain; its full sequence is Vasopressin-neurophysin 2-copeptin (166 aa).

Positions 1-19 (MPDATLPACFLGLLALTSA) are cleaved as a signal peptide. A disulfide bridge connects residues Cys20 and Cys25. Gly28 is modified (glycine amide). 7 disulfide bridges follow: Cys41–Cys85, Cys44–Cys58, Cys52–Cys75, Cys59–Cys65, Cys92–Cys104, Cys98–Cys116, and Cys105–Cys110. N-linked (GlcNAc...) asparagine glycosylation occurs at Asn133.

This sequence belongs to the vasopressin/oxytocin family. In terms of assembly, interacts with vasopressin receptors V1bR/AVPR1B (Ki=85 pM), V1aR/AVPR1A (Ki=0.6 nM) and V2R/AVPR2 (Ki=4.9 nM). Interacts with oxytocin receptor (OXTR) (Ki=110 nM). In terms of processing, a shorter neurophysin molecule (32-123) is called neurophysin-I and is derived from the complete protein (called neurophysin III) by proteolytic degradation (in vivo or after extraction).

It localises to the secreted. Its function is as follows. Neurophysin 2 specifically binds vasopressin. Functionally, vasopressin has a direct antidiuretic action on the kidney, it also causes vasoconstriction of the peripheral vessels. Acts by binding to vasopressin receptors (V1bR/AVPR1B, V1aR/AVPR1A, and V2R/AVPR2). This is Vasopressin-neurophysin 2-copeptin (AVP) from Sus scrofa (Pig).